A 498-amino-acid polypeptide reads, in one-letter code: Excisase C (498 aa).

Positions 263–446 constitute a Tyr recombinase domain; sequence KIIYSFDLFE…FGIENRKKAF (184 aa). Catalysis depends on residues R306, K336, R401, and H424. Y433 functions as the O-(3'-phospho-DNA)-tyrosine intermediate in the catalytic mechanism.

Belongs to the XisA/XisC recombinase family.

Essential for DNA excision. Site specific recombinase necessary for the excision of the 10.5 kb hupL element during heterocyst differentiation. The sequence is that of Excisase C (xisC) from Nostoc sp. (strain PCC 7120 / SAG 25.82 / UTEX 2576).